Reading from the N-terminus, the 315-residue chain is Calumenin (315 aa).

The signal sequence occupies residues 1–19 (MDTRRLLLCLCLWVACVVS). EF-hand domains follow at residues 68–103 (ESKE…AQKK), 104–139 (YVYD…TYLD), 151–186 (QMMV…EEFD), 188–223 (MKDI…HDGD), 229–264 (WVKT…SDYD), and 265–300 (HAEA…FVGS). The Ca(2+) site is built by Asp-81, Asp-83, Asp-85, Tyr-87, Glu-92, Asp-117, Asn-119, Asp-121, and Glu-128. N-linked (GlcNAc...) asparagine glycosylation occurs at Asn-131. Ca(2+) is bound by residues Asp-164, Asp-166, Asp-168, Glu-175, Asp-201, Asn-203, Asp-205, Glu-212, Asp-242, Asn-244, Asp-246, Lys-248, Glu-253, Asp-278, Asn-280, Asp-282, Lys-284, and Glu-289. A Prevents secretion from ER motif is present at residues 312–315 (HDEF).

It belongs to the CREC family. In terms of assembly, interacts with ggcx.

It localises to the endoplasmic reticulum membrane. It is found in the golgi apparatus. Its subcellular location is the secreted. The protein localises to the melanosome. The protein resides in the sarcoplasmic reticulum lumen. Involved in regulation of vitamin K-dependent carboxylation of multiple N-terminal glutamate residues. Seems to inhibit gamma-carboxylase ggcx. Binds 7 calcium ions with a low affinity. The protein is Calumenin (calu) of Xenopus tropicalis (Western clawed frog).